Consider the following 192-residue polypeptide: Ion-translocating oxidoreductase complex subunit B (192 aa).

Residues 1–26 (MNAIWIAVAAVSLLGLAFGAILGYAS) are hydrophobic. Positions 32–91 (EDDPVVEKIDEILPQSQCGQCGYPGCRPYAEAISCNGEKINRCAPGGEAVMLKIAELLNV) constitute a 4Fe-4S domain. 12 residues coordinate [4Fe-4S] cluster: C49, C52, C57, C74, C117, C120, C123, C127, C147, C150, C153, and C157. 2 consecutive 4Fe-4S ferredoxin-type domains span residues 108–137 (MVAVIDENNCIGCTKCIQACPVDAIVGATR) and 138–167 (AMHTVMSDLCTGCNLCVDPCPTHCISLQPV).

This sequence belongs to the 4Fe4S bacterial-type ferredoxin family. RnfB subfamily. As to quaternary structure, the complex is composed of six subunits: RsxA, RsxB, RsxC, RsxD, RsxE and RsxG. [4Fe-4S] cluster serves as cofactor.

It localises to the cell inner membrane. Functionally, part of a membrane-bound complex that couples electron transfer with translocation of ions across the membrane. Required to maintain the reduced state of SoxR. This Escherichia coli O8 (strain IAI1) protein is Ion-translocating oxidoreductase complex subunit B.